Here is a 906-residue protein sequence, read N- to C-terminus: Coatomer subunit beta' (906 aa).

WD repeat units follow at residues Ala13 to Thr52, Val55 to Met94, Ala97 to Gln136, Gly140 to Thr180, Gly183 to Thr224, Gly227 to Thr266, Ser350 to Phe388, and Ser390 to Lys425. An N6-acetyllysine modification is found at Lys627. The WD 9 repeat unit spans residues Ile746 to Lys783. The disordered stretch occupies residues Glu837–Lys872. Ser859 is subject to Phosphoserine. Thr861 is modified (phosphothreonine). Residues Thr866–Asp891 are a coiled coil.

The protein belongs to the WD repeat COPB2 family. As to quaternary structure, oligomeric complex that consists of at least the alpha, beta, beta', gamma, delta, epsilon and zeta subunits. Probably interacts with PEX11A. Interacts with SCYL1. Interacts with JAGN1.

It localises to the cytoplasm. Its subcellular location is the cytosol. It is found in the golgi apparatus membrane. The protein localises to the cytoplasmic vesicle. The protein resides in the COPI-coated vesicle membrane. In terms of biological role, the coatomer is a cytosolic protein complex that binds to dilysine motifs and reversibly associates with Golgi non-clathrin-coated vesicles, which further mediate biosynthetic protein transport from the ER, via the Golgi up to the trans Golgi network. Coatomer complex is required for budding from Golgi membranes, and is essential for the retrograde Golgi-to-ER transport of dilysine-tagged proteins. In mammals, the coatomer can only be recruited by membranes associated to ADP-ribosylation factors (ARFs), which are small GTP-binding proteins; the complex also influences the Golgi structural integrity, as well as the processing, activity, and endocytic recycling of LDL receptors. This coatomer complex protein, essential for Golgi budding and vesicular trafficking, is a selective binding protein (RACK) for protein kinase C, epsilon type. It binds to Golgi membranes in a GTP-dependent manner. In Bos taurus (Bovine), this protein is Coatomer subunit beta' (COPB2).